The primary structure comprises 574 residues: Ankyrin repeat protein B18 (574 aa).

6 ANK repeats span residues 56-87 (TGYT…DVTM), 135-164 (IKSR…DPNF), 167-213 (DGYT…NLNA), 217-249 (CGNT…NFKI), 253-285 (HGLT…NVGE), and 327-356 (EGKT…DINA). Residues 541–574 (NCLLTLLPSEIIYEILYMLTINDLYNISYPPTKV) form the F-box domain.

The protein is Ankyrin repeat protein B18 of Vaccinia virus (strain Ankara) (VACV).